Reading from the N-terminus, the 963-residue chain is Reversion-inducing cysteine-rich protein with Kazal motifs (963 aa).

An N-terminal signal peptide occupies residues 1 to 28; sequence MAAAVAAWPWALFCLAAVPPLLSPGAAG. The Knot 1 repeat unit spans residues 31-78; that stretch reads CCYHAKDNLMCRDVCEQILSSKSDSRLKHLLQRAPEYCPESMGEVWGC. Positions 31–332 are 5 X Knot repeats; sequence CCYHAKDNLM…NAVEVSMLTC (302 aa). Asn-80 carries N-linked (GlcNAc...) asparagine glycosylation. Knot repeat units lie at residues 98-135 and 145-191; these read CCEL…LFSC and CCSY…LIHC. An N-linked (GlcNAc...) asparagine glycan is attached at Asn-194. Knot repeat units lie at residues 210–257 and 286–332; these read CCDR…LWQC and CCSK…MLTC. 2 N-linked (GlcNAc...) asparagine glycosylation sites follow: Asn-291 and Asn-346. 3 Kazal-like domains span residues 621–667, 692–746, and 749–783; these read KFTG…SCIS, SFGK…PCQP, and KSVE…HCQA. 6 disulfides stabilise this stretch: Cys-627–Cys-652, Cys-629–Cys-648, Cys-637–Cys-665, Cys-710–Cys-729, Cys-718–Cys-744, and Cys-755–Cys-781. Ser-936 is lipidated: GPI-anchor amidated serine. A propeptide spanning residues 937–963 is cleaved from the precursor; it reads PSVKVGPVLHCLFISFSFTLLKLMDYI.

The protein belongs to the RECK family. In terms of assembly, interacts (via knot repeats) with WNT7A (via disordered linker region); the interaction is direct. Interacts (via knot repeats) with WNT7B (via disordered linker region); the interaction is direct. Interacts with ADGRA2; the interaction is direct. Localizes to the plasma membrane via its GPI-anchor. Released from the plasma membrane following cleavage of the GPI-anchor by GDPD5/GPE2.

It localises to the cell membrane. Functionally, functions together with ADGRA2 to enable brain endothelial cells to selectively respond to Wnt7 signals (WNT7A or WNT7B). Plays a key role in Wnt7-specific responses: required for central nervous system (CNS) angiogenesis and blood-brain barrier regulation. Acts as a Wnt7-specific coactivator of canonical Wnt signaling by decoding Wnt ligands: acts by interacting specifically with the disordered linker region of Wnt7, thereby conferring ligand selectivity for Wnt7. ADGRA2 is then required to deliver RECK-bound Wnt7 to frizzled by assembling a higher-order RECK-ADGRA2-Fzd-LRP5-LRP6 complex. Also acts as a serine protease inhibitor. The sequence is that of Reversion-inducing cysteine-rich protein with Kazal motifs from Gallus gallus (Chicken).